Here is a 232-residue protein sequence, read N- to C-terminus: Orotidine 5'-phosphate decarboxylase (232 aa).

Substrate is bound by residues D11, K33, 60–69, T120, R181, Q190, G210, and R211; that span reads DLKFHDIPNT. The active-site Proton donor is the K62.

This sequence belongs to the OMP decarboxylase family. Type 1 subfamily. In terms of assembly, homodimer.

The catalysed reaction is orotidine 5'-phosphate + H(+) = UMP + CO2. It functions in the pathway pyrimidine metabolism; UMP biosynthesis via de novo pathway; UMP from orotate: step 2/2. In terms of biological role, catalyzes the decarboxylation of orotidine 5'-monophosphate (OMP) to uridine 5'-monophosphate (UMP). The sequence is that of Orotidine 5'-phosphate decarboxylase from Vibrio vulnificus (strain YJ016).